The sequence spans 162 residues: uncharacterized protein (162 aa).

4 consecutive transmembrane segments (helical) span residues 15 to 35 (VLAI…APAL), 43 to 63 (VCHF…FDLS), 70 to 90 (LTIL…QSFL), and 97 to 117 (LFDI…NILY).

Its subcellular location is the membrane. This is an uncharacterized protein from Schizosaccharomyces pombe (strain 972 / ATCC 24843) (Fission yeast).